A 208-amino-acid polypeptide reads, in one-letter code: NAD(P)H-quinone oxidoreductase subunit I (208 aa).

4Fe-4S ferredoxin-type domains lie at 55–84 (GRIHYEFDKCIACEVCVRVCPINLPVVDWV) and 95–124 (RNYSIDFGVCIFCGNCVEYCPTNCLSMTEE). [4Fe-4S] cluster-binding residues include Cys-64, Cys-67, Cys-70, Cys-74, Cys-104, Cys-107, Cys-110, and Cys-114.

It belongs to the complex I 23 kDa subunit family. As to quaternary structure, NDH-1 is composed of at least 11 different subunits. The cofactor is [4Fe-4S] cluster.

Its subcellular location is the cellular thylakoid membrane. It catalyses the reaction a plastoquinone + NADH + (n+1) H(+)(in) = a plastoquinol + NAD(+) + n H(+)(out). The enzyme catalyses a plastoquinone + NADPH + (n+1) H(+)(in) = a plastoquinol + NADP(+) + n H(+)(out). Its function is as follows. NDH-1 shuttles electrons from an unknown electron donor, via FMN and iron-sulfur (Fe-S) centers, to quinones in the respiratory and/or the photosynthetic chain. The immediate electron acceptor for the enzyme in this species is believed to be plastoquinone. Couples the redox reaction to proton translocation, and thus conserves the redox energy in a proton gradient. The chain is NAD(P)H-quinone oxidoreductase subunit I from Prochlorococcus marinus (strain MIT 9515).